Reading from the N-terminus, the 432-residue chain is Gamma-glutamyl phosphate reductase (432 aa).

Belongs to the gamma-glutamyl phosphate reductase family.

It is found in the cytoplasm. The catalysed reaction is L-glutamate 5-semialdehyde + phosphate + NADP(+) = L-glutamyl 5-phosphate + NADPH + H(+). It functions in the pathway amino-acid biosynthesis; L-proline biosynthesis; L-glutamate 5-semialdehyde from L-glutamate: step 2/2. In terms of biological role, catalyzes the NADPH-dependent reduction of L-glutamate 5-phosphate into L-glutamate 5-semialdehyde and phosphate. The product spontaneously undergoes cyclization to form 1-pyrroline-5-carboxylate. The polypeptide is Gamma-glutamyl phosphate reductase (Deinococcus radiodurans (strain ATCC 13939 / DSM 20539 / JCM 16871 / CCUG 27074 / LMG 4051 / NBRC 15346 / NCIMB 9279 / VKM B-1422 / R1)).